A 403-amino-acid chain; its full sequence is O-succinylhomoserine sulfhydrylase (403 aa).

K219 bears the N6-(pyridoxal phosphate)lysine mark.

Belongs to the trans-sulfuration enzymes family. MetZ subfamily. As to quaternary structure, homotetramer. Pyridoxal 5'-phosphate is required as a cofactor.

It catalyses the reaction O-succinyl-L-homoserine + hydrogen sulfide = L-homocysteine + succinate. It participates in amino-acid biosynthesis; L-methionine biosynthesis via de novo pathway; L-homocysteine from O-succinyl-L-homoserine: step 1/1. In terms of biological role, catalyzes the formation of L-homocysteine from O-succinyl-L-homoserine (OSHS) and hydrogen sulfide. Cannot use the other activated form of L-homoserine, O-acetyl-L-homoserine, as a substrate. This is O-succinylhomoserine sulfhydrylase from Pseudomonas aeruginosa (strain ATCC 15692 / DSM 22644 / CIP 104116 / JCM 14847 / LMG 12228 / 1C / PRS 101 / PAO1).